The primary structure comprises 319 residues: L-threo-3-hydroxyaspartate ammonia-lyase (319 aa).

Residue lysine 53 is modified to N6-(pyridoxal phosphate)lysine. Pyridoxal 5'-phosphate-binding positions include asparagine 80, 179-183 (GGGGM), and threonine 304.

The protein belongs to the serine/threonine dehydratase family. May be either a monomer or a homodimer. The cofactor is pyridoxal 5'-phosphate. Mn(2+) is required as a cofactor. It depends on Mg(2+) as a cofactor. Ca(2+) serves as cofactor.

The enzyme catalyses (3S)-3-hydroxy-L-aspartate = oxaloacetate + NH4(+). Is strongly inhibited by hydroxylamine and EDTA in vitro. Functionally, catalyzes the deamination of L-threo-3-hydroxyaspartate to oxaloacetate and ammonia. Shows a high specificity towards L-threo-3-hydroxyaspartate as other 3-hydroxyaminoacids, i.e. D,L-erythro- and D-threo-3-hydroxyaspartate, D-threonine, L-threonine, D,L-allothreonine, D,L-threo-3-phenylserine, D-serine, and L-serine, are not substrates for this enzyme. Exhibits no detectable serine and aspartate racemase activity. Might play a role in the detoxification of naturally occurring 3-hydroxyaspartate in Pseudomonas sp. T62 cells. This chain is L-threo-3-hydroxyaspartate ammonia-lyase, found in Pseudomonas sp.